Here is a 155-residue protein sequence, read N- to C-terminus: Ribosomal RNA large subunit methyltransferase H (155 aa).

Residues isoleucine 71, glycine 103, and 122–127 each bind S-adenosyl-L-methionine; that span reads FGRMVW.

Belongs to the RNA methyltransferase RlmH family. In terms of assembly, homodimer.

It is found in the cytoplasm. It catalyses the reaction pseudouridine(1915) in 23S rRNA + S-adenosyl-L-methionine = N(3)-methylpseudouridine(1915) in 23S rRNA + S-adenosyl-L-homocysteine + H(+). In terms of biological role, specifically methylates the pseudouridine at position 1915 (m3Psi1915) in 23S rRNA. The chain is Ribosomal RNA large subunit methyltransferase H from Cereibacter sphaeroides (strain ATCC 17025 / ATH 2.4.3) (Rhodobacter sphaeroides).